The primary structure comprises 273 residues: NLP effector protein 10 (273 aa).

The signal sequence occupies residues M1–A21. N-linked (GlcNAc...) asparagine glycosylation is present at N91. A Conserved undecapeptide motif motif is present at residues A129 to A139. The short motif at G149–L155 is the Conserved heptapeptide motif element.

It belongs to the Necrosis inducing protein (NPP1) family.

The protein localises to the secreted. In terms of biological role, secreted effector that acts as a pathogen-associated molecular pattern (PAMP) recognized by the plant immune system. Seems not to induce necrosis in Nicotiana benthamiana leaves but significantly improves disease resistance of Arabidopsis thaliana to Hyaloperonospora arabidopsidis and causes an inhibition of plant growth which is typically associated with enhanced immunity when over-expressed in Arabidopsis. The polypeptide is NLP effector protein 10 (Plasmopara viticola (Downy mildew of grapevine)).